Consider the following 336-residue polypeptide: Palmitoyltransferase SWF1 (336 aa).

The Lumenal segment spans residues 1–2; sequence MS. The helical transmembrane segment at 3–23 threads the bilayer; that stretch reads WNLLFVLLIGFVVLILLSPVF. Residues 24-50 are Cytoplasmic-facing; that stretch reads KSTWPFSTFYRNVFQPFLVDDQKYRWK. Residues 51–71 form a helical membrane-spanning segment; it reads LHLVPLFYTSIYLYLVYTYHM. Residues 72–86 are Lumenal-facing; the sequence is RVESTIKNELFLLER. The chain crosses the membrane as a helical span at residues 87–107; the sequence is ILIVPIIILPPVALGILAMVS. Residues 108 to 179 are Cytoplasmic-facing; it reads RAEDSKDHKS…CIGKGNYLQF (72 aa). Positions 134–184 constitute a DHHC domain; that stretch reads IKCSTCRIVKPARSKHCSICNRCVLVADHHCIWINNCIGKGNYLQFYLFLI. Residues 180-200 form a helical membrane-spanning segment; it reads YLFLISNIFSMCYAFLRLWYI. Topologically, residues 201–216 are lumenal; the sequence is SLNSTSTLPRAVLTLT. The helical transmembrane segment at 217-237 threads the bilayer; the sequence is ILCGCFTIICAIFTYLQLAIV. Residues 238 to 336 are Cytoplasmic-facing; that stretch reads KEGMTTNEQD…TFLANLTDLI (99 aa).

It belongs to the DHHC palmitoyltransferase family. SWF1 subfamily.

The protein resides in the endoplasmic reticulum membrane. It carries out the reaction L-cysteinyl-[protein] + hexadecanoyl-CoA = S-hexadecanoyl-L-cysteinyl-[protein] + CoA. Palmitoyltransferase that targets several endosomal SNAREs. Palmitoylates the SNAREs SNC1, SNC2, SYN8 and TLG1, at cysteine residues close to the cytoplasmic end of their transmembrane domain. May have a role in the cellular quality control of transmembrane domain-containing proteins. In Saccharomyces cerevisiae (strain ATCC 204508 / S288c) (Baker's yeast), this protein is Palmitoyltransferase SWF1 (SWF1).